The sequence spans 545 residues: Hyaluronidase PH-20 (545 aa).

The signal sequence occupies residues 1-35 (MGVLKFKHIFFGSAVELSGVFQIVFIFLLIPCCLT). 2 disulfides stabilise this stretch: Cys-60–Cys-355 and Cys-224–Cys-239. Asn-82 is a glycosylation site (N-linked (GlcNAc...) asparagine). Residue Glu-148 is the Proton donor of the active site. N-linked (GlcNAc...) asparagine glycosylation occurs at Asn-180. Asn-372 carries N-linked (GlcNAc...) asparagine glycosylation. Disulfide bonds link Cys-380/Cys-391, Cys-385/Cys-439, and Cys-441/Cys-468.

Belongs to the glycosyl hydrolase 56 family. Testis.

The protein localises to the cell membrane. The enzyme catalyses Random hydrolysis of (1-&gt;4)-linkages between N-acetyl-beta-D-glucosamine and D-glucuronate residues in hyaluronate.. Its function is as follows. Involved in sperm-egg adhesion. Upon fertilization sperm must first penetrate a layer of cumulus cells that surrounds the egg before reaching the zona pellucida. The cumulus cells are embedded in a matrix containing hyaluronic acid which is formed prior to ovulation. This protein aids in penetrating the layer of cumulus cells by digesting hyaluronic acid. The chain is Hyaluronidase PH-20 (SPAM1) from Oryctolagus cuniculus (Rabbit).